A 432-amino-acid polypeptide reads, in one-letter code: Histidinol dehydrogenase (432 aa).

Positions 240, 262, and 265 each coordinate substrate. Zn(2+)-binding residues include Q262 and H265. Catalysis depends on proton acceptor residues E330 and H331. 4 residues coordinate substrate: H331, D364, E418, and H423. D364 is a binding site for Zn(2+). Zn(2+) is bound at residue H423.

This sequence belongs to the histidinol dehydrogenase family. The cofactor is Zn(2+).

The catalysed reaction is L-histidinol + 2 NAD(+) + H2O = L-histidine + 2 NADH + 3 H(+). It participates in amino-acid biosynthesis; L-histidine biosynthesis; L-histidine from 5-phospho-alpha-D-ribose 1-diphosphate: step 9/9. In terms of biological role, catalyzes the sequential NAD-dependent oxidations of L-histidinol to L-histidinaldehyde and then to L-histidine. In Wolinella succinogenes (strain ATCC 29543 / DSM 1740 / CCUG 13145 / JCM 31913 / LMG 7466 / NCTC 11488 / FDC 602W) (Vibrio succinogenes), this protein is Histidinol dehydrogenase.